The following is a 398-amino-acid chain: 8-amino-7-oxononanoate synthase (398 aa).

Position 23 (Arg-23) interacts with substrate. 110-111 (GY) contributes to the pyridoxal 5'-phosphate binding site. A substrate-binding site is contributed by His-135. Pyridoxal 5'-phosphate is bound by residues Ser-181, His-209, and Thr-238. Residue Lys-241 is modified to N6-(pyridoxal phosphate)lysine. Thr-355 lines the substrate pocket.

The protein belongs to the class-II pyridoxal-phosphate-dependent aminotransferase family. BioF subfamily. As to quaternary structure, homodimer. The cofactor is pyridoxal 5'-phosphate.

It carries out the reaction 6-carboxyhexanoyl-[ACP] + L-alanine + H(+) = (8S)-8-amino-7-oxononanoate + holo-[ACP] + CO2. The protein operates within cofactor biosynthesis; biotin biosynthesis. Catalyzes the decarboxylative condensation of pimeloyl-[acyl-carrier protein] and L-alanine to produce 8-amino-7-oxononanoate (AON), [acyl-carrier protein], and carbon dioxide. The polypeptide is 8-amino-7-oxononanoate synthase (Cellvibrio japonicus (strain Ueda107) (Pseudomonas fluorescens subsp. cellulosa)).